Here is a 233-residue protein sequence, read N- to C-terminus: Protein-methionine-sulfoxide reductase heme-binding subunit MsrQ (233 aa).

Helical transmembrane passes span 13 to 33 (IKAA…HGLW), 44 to 64 (ALTR…LCVS), 81 to 101 (MLGL…LWLD), 117 to 137 (PFIT…LTSS), 151 to 171 (SLHR…LWLV), and 174 to 194 (VALL…GWRV). Residues 50 to 164 (GIWTLNFLFL…AVYAVAILGV (115 aa)) form the Ferric oxidoreductase domain.

Belongs to the MsrQ family. In terms of assembly, heterodimer of a catalytic subunit (MsrP) and a heme-binding subunit (MsrQ).

Its subcellular location is the cell inner membrane. Its function is as follows. Part of the MsrPQ system that repairs oxidized periplasmic proteins containing methionine sulfoxide residues (Met-O), using respiratory chain electrons. Thus protects these proteins from oxidative-stress damage caused by reactive species of oxygen and chlorine generated by the host defense mechanisms. MsrPQ is essential for the maintenance of envelope integrity under bleach stress, rescuing a wide series of structurally unrelated periplasmic proteins from methionine oxidation. MsrQ provides electrons for reduction to the reductase catalytic subunit MsrP, using the quinone pool of the respiratory chain. Probably involved in protection against reactive chlorine species (RCS) generated by chlorite and hypochlorite. This Azospira oryzae (strain ATCC BAA-33 / DSM 13638 / PS) (Dechlorosoma suillum) protein is Protein-methionine-sulfoxide reductase heme-binding subunit MsrQ.